A 583-amino-acid chain; its full sequence is MERSMYAGRVRSEHIGTTITLKGWVSRRRNLGGLIFIDLRDREGLMQLVVNPENTDAAVVETAESLRSEFVIEVTGTVEAREQANDNLPTGAVELKVEDLKVLNTAKTTPFEIKDGVEASDDTRMRYRYLDLRRPEMLENFKLRAKVTHTIRNYLDDLEFIDVETPMLTKSTPEGARDYLVPSRVSQGHFYALPQSPQITKQLLMNAGFDRYYQIVKCFRDEDLRGDRQPEFTQVDLETSFLNEQEIQDITEGLIAKVMKETKGVEVTLPFPRMSYDDAMNNYGSDKPDTRFDMLLQDLTELVKDVDFKVFAEAPAVKAIVVKGNADKYSRKSIDKLTDFAKQFGAKGLAWVKMTDGVLAGPVAKFLTSIEEKLTDALQIEENDLVLFVADTLEIANNTLGALRNQIAKELDMIDNTKFNFLWVVDWPMFEWSEEEGRYMSAHHPFTLPTEDSAAELEGDLSKVRAVAYDIVLNGYELGGGSLRINQKDLQERMLKALGFSEESAYEQFGFLLEAMDYGFPPHGGLALGLDRFVMLLAGKDNIREVIAFPKNNKASDPMTQAPSLVADKQLEELALHVELENE.

E174 lines the L-aspartate pocket. The segment at 198-201 is aspartate; the sequence is QITK. L-aspartate is bound at residue R220. ATP-binding positions include 220-222 and Q229; that span reads RDE. An L-aspartate-binding site is contributed by H443. E477 is an ATP binding site. Residue R484 coordinates L-aspartate. 529 to 532 is a binding site for ATP; it reads GLDR.

The protein belongs to the class-II aminoacyl-tRNA synthetase family. Type 1 subfamily. In terms of assembly, homodimer.

It is found in the cytoplasm. The catalysed reaction is tRNA(Asp) + L-aspartate + ATP = L-aspartyl-tRNA(Asp) + AMP + diphosphate. Functionally, catalyzes the attachment of L-aspartate to tRNA(Asp) in a two-step reaction: L-aspartate is first activated by ATP to form Asp-AMP and then transferred to the acceptor end of tRNA(Asp). The polypeptide is Aspartate--tRNA ligase (Streptococcus thermophilus (strain ATCC BAA-491 / LMD-9)).